A 430-amino-acid polypeptide reads, in one-letter code: Serine carboxypeptidase-like 13 (430 aa).

An N-terminal signal peptide occupies residues 1-22 (MSLTLEFLLLLIVLILSHHAHS). 3 disulfide bridges follow: Cys-81-Cys-319, Cys-240-Cys-254, and Cys-278-Cys-285. The N-linked (GlcNAc...) asparagine glycan is linked to Asn-102. Ser-177 is an active-site residue. N-linked (GlcNAc...) asparagine glycans are attached at residues Asn-299 and Asn-323. Asp-355 is an active-site residue. Asn-371 is a glycosylation site (N-linked (GlcNAc...) asparagine). The active site involves His-408.

The protein belongs to the peptidase S10 family. Expression not detected.

The protein localises to the secreted. The enzyme catalyses 2 1-O-(trans-sinapoyl)-beta-D-glucose = 1,2-di-O-sinapoyl beta-D-glucose + D-glucose. Catalyzes the formation of 1,2-bis-O-sinapoyl beta-D-glucoside. In Arabidopsis thaliana (Mouse-ear cress), this protein is Serine carboxypeptidase-like 13 (SCPL13).